The following is a 343-amino-acid chain: 3-dehydroquinate synthase (343 aa).

NAD(+) is bound by residues serine 61–lysine 66, glycine 95–aspartate 99, threonine 119–threonine 120, lysine 132, lysine 141, and phenylalanine 159–threonine 162. Zn(2+) is bound by residues glutamate 174, histidine 231, and histidine 248.

Belongs to the sugar phosphate cyclases superfamily. Dehydroquinate synthase family. Co(2+) serves as cofactor. It depends on Zn(2+) as a cofactor. NAD(+) is required as a cofactor.

Its subcellular location is the cytoplasm. The enzyme catalyses 7-phospho-2-dehydro-3-deoxy-D-arabino-heptonate = 3-dehydroquinate + phosphate. The protein operates within metabolic intermediate biosynthesis; chorismate biosynthesis; chorismate from D-erythrose 4-phosphate and phosphoenolpyruvate: step 2/7. In terms of biological role, catalyzes the conversion of 3-deoxy-D-arabino-heptulosonate 7-phosphate (DAHP) to dehydroquinate (DHQ). The chain is 3-dehydroquinate synthase from Helicobacter pylori (strain G27).